The primary structure comprises 132 residues: Large ribosomal subunit protein uL14 (132 aa).

It belongs to the universal ribosomal protein uL14 family. As to quaternary structure, part of the 50S ribosomal subunit. Forms a cluster with proteins L3 and L24e, part of which may contact the 16S rRNA in 2 intersubunit bridges.

In terms of biological role, binds to 23S rRNA. Forms part of two intersubunit bridges in the 70S ribosome. The protein is Large ribosomal subunit protein uL14 of Natronomonas pharaonis (strain ATCC 35678 / DSM 2160 / CIP 103997 / JCM 8858 / NBRC 14720 / NCIMB 2260 / Gabara) (Halobacterium pharaonis).